A 126-amino-acid chain; its full sequence is Fluoride-specific ion channel FluC (126 aa).

4 helical membrane-spanning segments follow: residues 5 to 25 (FILA…LVGI), 39 to 59 (TLFI…LFAV), 69 to 89 (IFLV…SLDT), and 103 to 123 (AYMI…IQIV). Na(+) is bound by residues Gly77 and Thr80.

Belongs to the fluoride channel Fluc/FEX (TC 1.A.43) family.

The protein resides in the cell inner membrane. The enzyme catalyses fluoride(in) = fluoride(out). Na(+) is not transported, but it plays an essential structural role and its presence is essential for fluoride channel function. Its function is as follows. Fluoride-specific ion channel. Important for reducing fluoride concentration in the cell, thus reducing its toxicity. This chain is Fluoride-specific ion channel FluC, found in Nitrobacter winogradskyi (strain ATCC 25391 / DSM 10237 / CIP 104748 / NCIMB 11846 / Nb-255).